Here is an 801-residue protein sequence, read N- to C-terminus: Phosphatidylinositol 4-kinase beta (801 aa).

3 disordered regions span residues M1–L29, E101–Q121, and R250–P304. G2 carries the post-translational modification N-acetylglycine. The tract at residues G2–V68 is interaction with ACBD3. The 214-residue stretch at L29 to S242 folds into the PIK helical domain. S258 carries the phosphoserine modification. A compositionally biased stretch (polar residues) spans P259 to S268. T263 carries the phosphothreonine modification. 6 positions are modified to phosphoserine: S266, S275, S277, S284, S294, and S413. The span at D278 to S294 shows a compositional bias: low complexity. The residue at position 423 (T423) is a Phosphothreonine. Phosphoserine is present on S496. Residues T502 and T504 each carry the phosphothreonine modification. The 267-residue stretch at E520–T786 folds into the PI3K/PI4K catalytic domain. Positions V526–G532 are G-loop. A catalytic loop region spans residues Q653–N661. Positions H672 to T696 are activation loop.

Belongs to the PI3/PI4-kinase family. Type III PI4K subfamily. Interacts with ARF1 and ARF3 in the Golgi complex, but not with ARF4, ARF5 or ARF6. Interacts with NCS1/FREQ in a calcium-independent manner. Interacts with CALN1/CABP8 and CALN2/CABP7; in a calcium-dependent manner; this interaction competes with NCS1/FREQ binding. Interacts with ACBD3. Interacts with ARMH3, YWHAB, YWHAE, YWHAG, YWHAH, YWHAQ, YWHAZ and SFN. Interacts with GGA2 (via VHS domain); the interaction is important for PI4KB location at the Golgi apparatus membrane. Interacts with ATG9A. Requires Mg(2+) as cofactor. Mn(2+) is required as a cofactor.

The protein localises to the endomembrane system. It is found in the mitochondrion outer membrane. It localises to the rough endoplasmic reticulum membrane. The protein resides in the golgi apparatus. Its subcellular location is the golgi apparatus membrane. The enzyme catalyses a 1,2-diacyl-sn-glycero-3-phospho-(1D-myo-inositol) + ATP = a 1,2-diacyl-sn-glycero-3-phospho-(1D-myo-inositol 4-phosphate) + ADP + H(+). Its activity is regulated as follows. Inhibited by wortmannin. Increased kinase activity upon interaction with NCS1/FREQ. Functionally, phosphorylates phosphatidylinositol (PI) in the first committed step in the production of the second messenger inositol-1,4,5,-trisphosphate (PIP). May regulate Golgi disintegration/reorganization during mitosis, possibly via its phosphorylation. Involved in Golgi-to-plasma membrane trafficking. May play an important role in the inner ear development. This is Phosphatidylinositol 4-kinase beta (PI4KB) from Sorex araneus (Eurasian common shrew).